Consider the following 214-residue polypeptide: Ribosomal RNA small subunit methyltransferase G (214 aa).

S-adenosyl-L-methionine is bound by residues glycine 77, phenylalanine 82, 128–129, and arginine 143; that span reads VE.

The protein belongs to the methyltransferase superfamily. RNA methyltransferase RsmG family.

The protein localises to the cytoplasm. The catalysed reaction is guanosine(527) in 16S rRNA + S-adenosyl-L-methionine = N(7)-methylguanosine(527) in 16S rRNA + S-adenosyl-L-homocysteine. Specifically methylates the N7 position of guanine in position 527 of 16S rRNA. This Nitrosomonas europaea (strain ATCC 19718 / CIP 103999 / KCTC 2705 / NBRC 14298) protein is Ribosomal RNA small subunit methyltransferase G.